The chain runs to 351 residues: uncharacterized protein (351 aa).

Residues 1 to 27 (MKNKKRVLIASSLSCAILLLSAATTQA) form the signal peptide. Residues 28 to 71 (NSAHKDSQDQNKKEHVDKSQQKDKRNVTNKDKNSTVPDDIGKNG) form a disordered region. The span at 30–60 (AHKDSQDQNKKEHVDKSQQKDKRNVTNKDKN) shows a compositional bias: basic and acidic residues.

Belongs to the aerolysin family.

This is an uncharacterized protein from Staphylococcus aureus (strain N315).